The chain runs to 124 residues: Holo-[acyl-carrier-protein] synthase (124 aa).

2 residues coordinate Mg(2+): Asp8 and Glu56.

The protein belongs to the P-Pant transferase superfamily. AcpS family. Mg(2+) serves as cofactor.

The protein resides in the cytoplasm. It catalyses the reaction apo-[ACP] + CoA = holo-[ACP] + adenosine 3',5'-bisphosphate + H(+). Its function is as follows. Transfers the 4'-phosphopantetheine moiety from coenzyme A to a Ser of acyl-carrier-protein. The sequence is that of Holo-[acyl-carrier-protein] synthase from Maridesulfovibrio salexigens (strain ATCC 14822 / DSM 2638 / NCIMB 8403 / VKM B-1763) (Desulfovibrio salexigens).